We begin with the raw amino-acid sequence, 78 residues long: MSRVCQVTGKRPMVGNNRSHAKNSTRRRFLPNLQNHRFWLENEKRFVQLRISTKGMRIIDKKGIEVVIAELRARGEKV.

Residues 1–23 (MSRVCQVTGKRPMVGNNRSHAKN) are disordered.

Belongs to the bacterial ribosomal protein bL28 family.

This chain is Large ribosomal subunit protein bL28, found in Shewanella pealeana (strain ATCC 700345 / ANG-SQ1).